We begin with the raw amino-acid sequence, 379 residues long: Alcohol dehydrogenase 1 (379 aa).

8 residues coordinate Zn(2+): cysteine 47, threonine 49, histidine 69, cysteine 99, cysteine 102, cysteine 105, cysteine 113, and cysteine 177. An alcohol-binding residues include threonine 49 and histidine 69. Residue threonine 49 coordinates NAD(+). NAD(+) is bound by residues 202 to 207, aspartate 226, arginine 231, threonine 272, valine 295, 295 to 297, phenylalanine 322, and arginine 372; these read GLGAVG and VGV.

The protein belongs to the zinc-containing alcohol dehydrogenase family. Homodimer. Requires Zn(2+) as cofactor.

It localises to the cytoplasm. The catalysed reaction is a primary alcohol + NAD(+) = an aldehyde + NADH + H(+). It catalyses the reaction a secondary alcohol + NAD(+) = a ketone + NADH + H(+). The protein is Alcohol dehydrogenase 1 (ADH1) of Oryza sativa subsp. indica (Rice).